The primary structure comprises 154 residues: 6,7-dimethyl-8-ribityllumazine synthase (154 aa).

Residues Phe-22, Ala-56 to Glu-58, and Ala-80 to Ile-82 contribute to the 5-amino-6-(D-ribitylamino)uracil site. Residue Ala-85–Thr-86 coordinates (2S)-2-hydroxy-3-oxobutyl phosphate. His-88 functions as the Proton donor in the catalytic mechanism. Position 113 (Phe-113) interacts with 5-amino-6-(D-ribitylamino)uracil. A (2S)-2-hydroxy-3-oxobutyl phosphate-binding site is contributed by Arg-127.

This sequence belongs to the DMRL synthase family. As to quaternary structure, forms an icosahedral capsid composed of 60 subunits, arranged as a dodecamer of pentamers.

The enzyme catalyses (2S)-2-hydroxy-3-oxobutyl phosphate + 5-amino-6-(D-ribitylamino)uracil = 6,7-dimethyl-8-(1-D-ribityl)lumazine + phosphate + 2 H2O + H(+). It participates in cofactor biosynthesis; riboflavin biosynthesis; riboflavin from 2-hydroxy-3-oxobutyl phosphate and 5-amino-6-(D-ribitylamino)uracil: step 1/2. In terms of biological role, catalyzes the formation of 6,7-dimethyl-8-ribityllumazine by condensation of 5-amino-6-(D-ribitylamino)uracil with 3,4-dihydroxy-2-butanone 4-phosphate. This is the penultimate step in the biosynthesis of riboflavin. The sequence is that of 6,7-dimethyl-8-ribityllumazine synthase from Anoxybacillus flavithermus (strain DSM 21510 / WK1).